Here is an 84-residue protein sequence, read N- to C-terminus: Cytochrome b559 subunit alpha (84 aa).

The Cytoplasmic portion of the chain corresponds to Ala2–Trp20. A helical transmembrane segment spans residues Val21–Trp35. His23 provides a ligand contact to heme. Residues Leu36–Lys84 are Lumenal-facing.

The protein belongs to the PsbE/PsbF family. As to quaternary structure, heterodimer of an alpha subunit and a beta subunit. PSII is composed of 1 copy each of membrane proteins PsbA, PsbB, PsbC, PsbD, PsbE, PsbF, PsbH, PsbI, PsbJ, PsbK, PsbL, PsbM, PsbT, PsbX, PsbY, PsbZ, Psb30/Ycf12, peripheral proteins PsbO, CyanoQ (PsbQ), PsbU, PsbV and a large number of cofactors. It forms dimeric complexes. The cofactor is heme b.

It localises to the cellular thylakoid membrane. This b-type cytochrome is tightly associated with the reaction center of photosystem II (PSII). PSII is a light-driven water:plastoquinone oxidoreductase that uses light energy to abstract electrons from H(2)O, generating O(2) and a proton gradient subsequently used for ATP formation. It consists of a core antenna complex that captures photons, and an electron transfer chain that converts photonic excitation into a charge separation. This chain is Cytochrome b559 subunit alpha, found in Thermostichus vulcanus (Synechococcus vulcanus).